A 610-amino-acid polypeptide reads, in one-letter code: Threonine--tRNA ligase (610 aa).

The interval 1–29 (MANHDQQTVSSAAATTSASPSPVVLPKTS) is disordered. Positions 8 to 24 (TVSSAAATTSASPSPVV) are enriched in low complexity. Positions 209–502 (DHRRIGKDLD…MTENYAGDYP (294 aa)) are catalytic. 3 residues coordinate Zn(2+): cysteine 302, histidine 353, and histidine 479.

This sequence belongs to the class-II aminoacyl-tRNA synthetase family. Homodimer. It depends on Zn(2+) as a cofactor.

It localises to the cytoplasm. It catalyses the reaction tRNA(Thr) + L-threonine + ATP = L-threonyl-tRNA(Thr) + AMP + diphosphate + H(+). Its function is as follows. Catalyzes the attachment of threonine to tRNA(Thr) in a two-step reaction: L-threonine is first activated by ATP to form Thr-AMP and then transferred to the acceptor end of tRNA(Thr). Also edits incorrectly charged L-seryl-tRNA(Thr). This is Threonine--tRNA ligase from Synechococcus sp. (strain WH7803).